A 240-amino-acid polypeptide reads, in one-letter code: Biosynthetic peptidoglycan transglycosylase (240 aa).

A helical transmembrane segment spans residues 27–47 (VVLLFFFAVFALLLIFRFVPI).

It belongs to the glycosyltransferase 51 family.

It localises to the cell inner membrane. It carries out the reaction [GlcNAc-(1-&gt;4)-Mur2Ac(oyl-L-Ala-gamma-D-Glu-L-Lys-D-Ala-D-Ala)](n)-di-trans,octa-cis-undecaprenyl diphosphate + beta-D-GlcNAc-(1-&gt;4)-Mur2Ac(oyl-L-Ala-gamma-D-Glu-L-Lys-D-Ala-D-Ala)-di-trans,octa-cis-undecaprenyl diphosphate = [GlcNAc-(1-&gt;4)-Mur2Ac(oyl-L-Ala-gamma-D-Glu-L-Lys-D-Ala-D-Ala)](n+1)-di-trans,octa-cis-undecaprenyl diphosphate + di-trans,octa-cis-undecaprenyl diphosphate + H(+). Its pathway is cell wall biogenesis; peptidoglycan biosynthesis. Functionally, peptidoglycan polymerase that catalyzes glycan chain elongation from lipid-linked precursors. The sequence is that of Biosynthetic peptidoglycan transglycosylase from Haemophilus influenzae (strain PittEE).